A 141-amino-acid chain; its full sequence is MAKKIVAIIKLALPAGKANPAPPVGPALGQHGVNIMAFCKEYNGKTSDQVGMVIPVEISVFEDRSFTFVLKTPPASVLIRKAAGVERGSNEPNKKNVGSITQDQLREIAQTKMPDLNANDIEAAMKIVAGTARNMGISVKD.

Belongs to the universal ribosomal protein uL11 family. As to quaternary structure, part of the ribosomal stalk of the 50S ribosomal subunit. Interacts with L10 and the large rRNA to form the base of the stalk. L10 forms an elongated spine to which L12 dimers bind in a sequential fashion forming a multimeric L10(L12)X complex. In terms of processing, one or more lysine residues are methylated.

In terms of biological role, forms part of the ribosomal stalk which helps the ribosome interact with GTP-bound translation factors. This is Large ribosomal subunit protein uL11 from Gloeothece citriformis (strain PCC 7424) (Cyanothece sp. (strain PCC 7424)).